We begin with the raw amino-acid sequence, 320 residues long: Glutathione synthetase (320 aa).

The ATP-grasp domain maps to 130 to 315 (KIFISWFSRF…ITGILIDYIE (186 aa)). 156–212 (WKEKNDIILKPLDAMGGKGVFRIKKDDPNFSVIVETLTNYEKKYCMIQTYLPEVQFG) is a binding site for ATP. Positions 286 and 288 each coordinate Mg(2+).

The protein belongs to the prokaryotic GSH synthase family. Mg(2+) serves as cofactor. The cofactor is Mn(2+).

The catalysed reaction is gamma-L-glutamyl-L-cysteine + glycine + ATP = glutathione + ADP + phosphate + H(+). It participates in sulfur metabolism; glutathione biosynthesis; glutathione from L-cysteine and L-glutamate: step 2/2. The polypeptide is Glutathione synthetase (Buchnera aphidicola subsp. Schizaphis graminum (strain Sg)).